Here is a 643-residue protein sequence, read N- to C-terminus: Transcription elongation factor B polypeptide 3 (643 aa).

The 74-residue stretch at 9–82 folds into the TFIIS N-terminal domain; sequence DVVRHYQRSI…TKWKAMVAKE (74 aa). Disordered regions lie at residues 86–289 and 302–351; these read IAST…MGAN and SSKK…SKKP. Positions 94–106 are enriched in basic and acidic residues; that stretch reads HNEEDSGKTKSSD. Residues 114 to 124 are compositionally biased toward polar residues; that stretch reads KGGNSSSGEDL. Phosphoserine is present on Ser-120. Basic residues predominate over residues 127 to 136; that stretch reads SKHKSKHAKS. Composition is skewed to basic and acidic residues over residues 164–198 and 207–237; these read HDKS…KDSS and SKSE…VKDK. The segment covering 238-255 has biased composition (basic residues); that stretch reads SSKHKSSSSKSSKRSHSP. Residues 302–336 are compositionally biased toward low complexity; sequence SSKKSSSNSKSKFVAKPTAAPSSSALSAPTTAGSS. The activation domain stretch occupies residues 413–571; that stretch reads AQGISSKTMR…PPRSVQRKQE (159 aa). An interacting with Elongin BC complex region spans residues 439-448; that stretch reads SLFDLCTRVL.

It localises to the nucleus. In terms of biological role, SIII, also known as elongin, is a general transcription elongation factor that increases the RNA polymerase II transcription elongation past template-encoded arresting sites. Subunit A is transcriptionally active and its transcription activity is strongly enhanced by binding to the dimeric complex of the SIII regulatory subunits B and C (elongin BC complex). May play an important role in metamorphosis. The chain is Transcription elongation factor B polypeptide 3 (EloA) from Drosophila melanogaster (Fruit fly).